A 309-amino-acid polypeptide reads, in one-letter code: Olfactory receptor 1A1 (309 aa).

Over 1–25 (MRENNQSSTLEFILLGVTGQQEQED) the chain is Extracellular. N-linked (GlcNAc...) asparagine glycosylation occurs at asparagine 5. A helical transmembrane segment spans residues 26-49 (FFYILFLFIYPITLIGNLLIVLAI). The Cytoplasmic segment spans residues 50 to 57 (CSDVHLHN). Residues 58–79 (PMYFLLANLSLVDIFFSSVTIP) form a helical membrane-spanning segment. Residues 80-100 (KMLANHLSGSKSISFGGCLTQ) lie on the Extracellular side of the membrane. A disulfide bond links cysteine 97 and cysteine 189. The chain crosses the membrane as a helical span at residues 101–120 (MYFMIDLGNTDSYTLAAMAY). Topologically, residues 121–139 (DRAVAISRPLHYTTIMSPR) are cytoplasmic. The helical transmembrane segment at 140 to 158 (SCIWLIAGSWVIGNANALP) threads the bilayer. Residues 159 to 195 (HTLLTASLSFCGNQEVANFYCDITPLLKLSCSDIHFH) lie on the Extracellular side of the membrane. Residues 196-218 (VKMMYLGVGIFSVPLLCIIVSYI) traverse the membrane as a helical segment. Over 219 to 235 (RVFSTVFQVPSTKGVLK) the chain is Cytoplasmic. Residues 236–258 (AFSTCGSHLTVVSLYYGTVMGMY) form a helical membrane-spanning segment. Residues 259-270 (FRPLTNYSLKDA) lie on the Extracellular side of the membrane. The N-linked (GlcNAc...) asparagine glycan is linked to asparagine 264. The chain crosses the membrane as a helical span at residues 271–290 (VITVMCTAVTPMLNPFIYSL). At 291–309 (RNRDMKAALQKLFNKRISS) the chain is on the cytoplasmic side.

Belongs to the G-protein coupled receptor 1 family.

Its subcellular location is the cell membrane. In terms of biological role, odorant receptor. In Gorilla gorilla gorilla (Western lowland gorilla), this protein is Olfactory receptor 1A1 (OR1A1).